A 136-amino-acid chain; its full sequence is Protein NrdI (136 aa).

It belongs to the NrdI family.

In terms of biological role, probably involved in ribonucleotide reductase function. In Escherichia coli O127:H6 (strain E2348/69 / EPEC), this protein is Protein NrdI.